The sequence spans 433 residues: G-protein coupled receptor 22 (433 aa).

Residues 1–45 (MCFSPILEINMQSESNITVRDDIDDINTNMYQPLSYPLSFQVSLT) lie on the Extracellular side of the membrane. Residue N16 is glycosylated (N-linked (GlcNAc...) asparagine). The chain crosses the membrane as a helical span at residues 46 to 66 (GFLMLEIVLGLGSNLTVLVLY). The Cytoplasmic segment spans residues 67-85 (CMKSNLINSVSNIITMNLH). A helical transmembrane segment spans residues 86–106 (VLDVIICVGCIPLTIVILLLS). Topologically, residues 107–115 (LESNTALIC) are extracellular. Residues 116–136 (CFHEACVSFASVSTAINVFAI) form a helical membrane-spanning segment. Topologically, residues 137–156 (TLDRYDISVKPANRILTMGR) are cytoplasmic. The helical transmembrane segment at 157-177 (AVMLMISIWIFSFFSFLIPFI) threads the bilayer. Topologically, residues 178–208 (EVNFFSLQSGNTWENKTLLCVSTNEYYTELG) are extracellular. N192 carries an N-linked (GlcNAc...) asparagine glycan. Residues 209–229 (MYYHLLVQIPIFFFTVVVMLI) form a helical membrane-spanning segment. At 230-315 (TYTKILQALN…ERQKRVFRMS (86 aa)) the chain is on the cytoplasmic side. The helical transmembrane segment at 316–336 (LLIISTFLLCWTPISVLNTTI) threads the bilayer. Residues 337–349 (LCLGPSDLLVKLR) lie on the Extracellular side of the membrane. The chain crosses the membrane as a helical span at residues 350–370 (LCFLVMAYGTTIFHPLLYAFT). At 371–433 (RQKFQKVLKS…KCLVPQVVTD (63 aa)) the chain is on the cytoplasmic side.

Belongs to the G-protein coupled receptor 1 family. In terms of tissue distribution, high expression in adult and fetal heart tissue. Expressed in the brain, with enrichment in the accumbens, amygdala, cerebellum, cortex, and hippocampus regions.

Its subcellular location is the cell membrane. Its function is as follows. Orphan G-protein coupled receptor. Seems to act through a G(i)/G(o) mediated pathway. May be involved in ciliogenesis. The sequence is that of G-protein coupled receptor 22 from Homo sapiens (Human).